A 262-amino-acid polypeptide reads, in one-letter code: Integral membrane protein 2B (262 aa).

Topologically, residues 1–49 (MVKVSFNSALAHKEAANKEEENSQVLILPPDAKEPEDVVVPAGHKRAWC) are cytoplasmic. The helical; Signal-anchor for type II membrane protein transmembrane segment at 50–70 (WCMCFGLAFMLAGVILGGAYL) threads the bilayer. The Lumenal segment spans residues 71 to 262 (YKYFAFQQGG…FAMETLICEQ (192 aa)). The region spanning 132–226 (FADSDPADIV…LCRGKETYKL (95 aa)) is the BRICHOS domain. 2 disulfides stabilise this stretch: cysteine 159-cysteine 218 and cysteine 243-cysteine 260. The N-linked (GlcNAc...) asparagine glycan is linked to asparagine 165.

This sequence belongs to the ITM2 family. As to quaternary structure, homodimer; disulfide-linked. Expressed in areas of chondro-osteogenic transition and widely in the nervous system.

The protein resides in the golgi apparatus membrane. It is found in the cell membrane. Its subcellular location is the endosome membrane. Functionally, plays a role in the induction of neurite outgrowth. This is Integral membrane protein 2B (ITM2B) from Gallus gallus (Chicken).